The chain runs to 532 residues: FAD-dependent monooxygenase hkm7 (532 aa).

Residues Arg-191–Tyr-193 and Asp-261 each bind FAD.

It belongs to the PheA/TfdB FAD monooxygenase family.

The protein operates within secondary metabolite biosynthesis. FAD-dependent monooxygenase; part of the gene cluster that mediates the biosynthesis of hancockiamides, an unusual new family of N-cinnamoylated piperazines. The NRPS hkm10 and the NmrA-like reductase hkm9 are proposed to convert two molecules of L-Phe to the intermediary piperazine called xenocockiamide A. Xenocockiamide A is then converted to hancockiamide D via a series of hydroxylations and O-methylations. The tyrosinase hkm6 may catalyze an aromatic hydroxylation, then the 2-oxoglutarate-dependent Fe(II) dioxygenase hkm4 and the FAD-dependent phenol hydroxylase hkm7 may catalyze consecutive hydroxylations to install 2 more hydroxy groups, and the methyltransferase hkm8 probably catalyzes two methylations using 2 molecules of S-adenosyl-L-methionine (SAM). The NRPS hkm11 activates and transfers trans-cinnamate supplied by the PAL hkm12 to hancockiamide D and produces hancockiamide A. NRPS Hkm11 has the flexibility to tolerate the bulky hancockiamide G as a substrate and the absence of the acetyl-transferase hkm3 opens up the opportunity for hkm11 to introduce a second N-cinnamoyl moiety. The cytochrome P450 monooxygenase hkm5 catalyzes the methylenedioxy bridge formation, converting hancockiamide A into hancockiamide G. Hkm5 can also convert hancockiamide B into hancockiamide C, and hancockiamide D into hancockiamide H. The N-acetyltransferase hkm3 finally transfers an acetyl group to 1-N of piperazine, converting hancockiamide A into hancockiamide B and hancockiamide G into hancockiamide C. In Aspergillus hancockii, this protein is FAD-dependent monooxygenase hkm7.